Reading from the N-terminus, the 424-residue chain is Deoxyguanosinetriphosphate triphosphohydrolase-like protein (424 aa).

The disordered stretch occupies residues Met-1–Thr-24. Over residues Asp-8–Lys-18 the composition is skewed to basic and acidic residues. Residues Arg-67–Ser-217 form the HD domain.

This sequence belongs to the dGTPase family. Type 2 subfamily.

This chain is Deoxyguanosinetriphosphate triphosphohydrolase-like protein, found in Corynebacterium glutamicum (strain R).